The chain runs to 339 residues: Ornithine carbamoyltransferase, catabolic (339 aa).

Carbamoyl phosphate is bound by residues 57–60, Gln84, Arg108, and 135–138; these read STRT and HPTQ. L-ornithine-binding positions include Asn167, Asp231, and 235 to 236; that span reads SM. Carbamoyl phosphate is bound by residues 274-275 and Arg319; that span reads CL.

This sequence belongs to the aspartate/ornithine carbamoyltransferase superfamily. OTCase family.

It is found in the cytoplasm. It catalyses the reaction carbamoyl phosphate + L-ornithine = L-citrulline + phosphate + H(+). It functions in the pathway amino-acid degradation; L-arginine degradation via ADI pathway; carbamoyl phosphate from L-arginine: step 2/2. In terms of biological role, reversibly catalyzes the transfer of the carbamoyl group from carbamoyl phosphate (CP) to the N(epsilon) atom of ornithine (ORN) to produce L-citrulline. The sequence is that of Ornithine carbamoyltransferase, catabolic (arcB) from Enterococcus faecalis (strain ATCC 700802 / V583).